The primary structure comprises 414 residues: Esterase FrsA (414 aa).

Belongs to the FrsA family.

It carries out the reaction a carboxylic ester + H2O = an alcohol + a carboxylate + H(+). Catalyzes the hydrolysis of esters. The sequence is that of Esterase FrsA from Shigella boydii serotype 4 (strain Sb227).